The primary structure comprises 422 residues: Putative serpin-Z8 (422 aa).

Positions 369–393 (GTVAAAATMTRMLPSGVPPPPVDFV) are RCL.

Belongs to the serpin family.

Functionally, probable serine protease inhibitor. The chain is Putative serpin-Z8 from Oryza sativa subsp. japonica (Rice).